The sequence spans 335 residues: Karyogamy protein KAR4 (335 aa).

A disordered region spans residues 1–25 (MAFQDPTYDQNKSRHINNSHLQGPN). A compositionally biased stretch (polar residues) spans 16-25 (INNSHLQGPN).

It belongs to the MT-A70-like family. In terms of assembly, component of the MIS (mRNA N6-methyladenosine (m6A) methylation) complex, at least composed of IME4, KAR4, MUM2, SLZ1, and VIR1. Interacts with VIR1.

The protein localises to the nucleus. It is found in the cytoplasm. Component of the MIS complex, a complex that mediates N6-methyladenosine (m6A) methylation of meiotic mRNAs and is required for initiation of meiosis, progression through the meiotic divisions and sporulation. May assist STE12 in the pheromone-dependent expression of KAR3 and CIK1. The sequence is that of Karyogamy protein KAR4 (KAR4) from Saccharomyces cerevisiae (strain ATCC 204508 / S288c) (Baker's yeast).